The sequence spans 322 residues: Arginase-1 (322 aa).

Residues 1 to 12 (MSSKSKSIGIIG) show a composition bias toward low complexity. The interval 1–26 (MSSKSKSIGIIGAPFSKGQPRGGVEE) is disordered. Position 7 is a phosphoserine (S7). K17 is modified (N6-succinyllysine). S62 is modified (phosphoserine). H101, D124, H126, and D128 together coordinate Mn(2+). Residues 126 to 130 (HTDIN) and 137 to 139 (SGN) contribute to the substrate site. Residue S163 is modified to Phosphoserine. D183 contributes to the substrate binding site. Mn(2+) is bound by residues D232 and D234. 2 residues coordinate substrate: T246 and E277.

This sequence belongs to the arginase family. Homotrimer. Interacts with CMTM6. Mn(2+) serves as cofactor.

The protein resides in the cytoplasm. It carries out the reaction L-arginine + H2O = urea + L-ornithine. The protein operates within nitrogen metabolism; urea cycle; L-ornithine and urea from L-arginine: step 1/1. This chain is Arginase-1 (ARG1), found in Oryctolagus cuniculus (Rabbit).